Here is a 326-residue protein sequence, read N- to C-terminus: Microtubule-associated protein RP/EB family member 2 (326 aa).

A Phosphoserine modification is found at Ser9. A Calponin-homology (CH) domain is found at 56 to 158; the sequence is TMSRHDIIAW…FIQWFKKFYD (103 aa). The residue at position 166 (Tyr166) is a Phosphotyrosine. 2 disordered regions span residues 170–239 and 298–326; these read EARQ…DKDL and ASDE…QEEY. The tract at residues 186–326 is DCTN1-binding; it reads QIFNLPKKSH…EQQPQQQEEY (141 aa). A compositionally biased stretch (low complexity) spans 199–233; it reads SPTAGAAKSSPASKPGSTPSRPSSAKRASSSGSAS. Residues Ser218 and Ser235 each carry the phosphoserine modification. Residues 235-305 enclose the EB1 C-terminal domain; that stretch reads SDKDLETQVI…LYASDEHEGH (71 aa). The interval 258–301 is APC-binding; it reads EGVEKERDFYFGKLREIELLCQEHGQENDDLVQRLMDVLYASDE. Over residues 299–316 the composition is skewed to basic and acidic residues; sequence SDEHEGHPEEPEAEEQVH. Positions 317-326 are enriched in low complexity; sequence EQQPQQQEEY.

Belongs to the MAPRE family. In terms of assembly, interacts with DCTN1. Interacts with APC (via C-terminal). Interacts with monomeric and polymerized tubulin. Interacts with SLAIN1. Interacts (via the N-terminal region) with BAG1. Interacts with ASB14. Interacts with HAX1; this interaction is essential for epidermal cell migration. Post-translationally, phosphorylated at Ser-235 by CK2 leading to enhanced cell adhesion. Phosphorylated by CDK1 and AURKB during mitosis reduces the binding affinity of MAPRE2 for microtubules. Ubiquitinated in an ASB14-dependent manner; leading to proteasomal degradation.

The protein localises to the cytoplasm. The protein resides in the cytoskeleton. Adapter protein that is involved in microtubule polymerization, and spindle function by stabilizing microtubules and anchoring them at centrosomes. Therefore, ensures mitotic progression and genome stability. Acts as a central regulator of microtubule reorganization in apico-basal epithelial differentiation. Plays a role during oocyte meiosis by regulating microtubule dynamics. Participates in neurite growth by interacting with plexin B3/PLXNB3 and microtubule reorganization during apico-basal epithelial differentiation. Also plays an essential role for cell migration and focal adhesion dynamics. Mechanistically, recruits HAX1 to microtubules in order to regulate focal adhesion dynamics. The protein is Microtubule-associated protein RP/EB family member 2 (MAPRE2) of Bos taurus (Bovine).